Here is a 308-residue protein sequence, read N- to C-terminus: Bifunctional protein FolD (308 aa).

170–172 (GKG) serves as a coordination point for NADP(+).

This sequence belongs to the tetrahydrofolate dehydrogenase/cyclohydrolase family. In terms of assembly, homodimer.

The enzyme catalyses (6R)-5,10-methylene-5,6,7,8-tetrahydrofolate + NADP(+) = (6R)-5,10-methenyltetrahydrofolate + NADPH. The catalysed reaction is (6R)-5,10-methenyltetrahydrofolate + H2O = (6R)-10-formyltetrahydrofolate + H(+). The protein operates within one-carbon metabolism; tetrahydrofolate interconversion. Catalyzes the oxidation of 5,10-methylenetetrahydrofolate to 5,10-methenyltetrahydrofolate and then the hydrolysis of 5,10-methenyltetrahydrofolate to 10-formyltetrahydrofolate. This chain is Bifunctional protein FolD, found in Pyrobaculum calidifontis (strain DSM 21063 / JCM 11548 / VA1).